The chain runs to 491 residues: UDP-N-acetylmuramate--L-alanine ligase (491 aa).

126 to 132 (GTHGKTT) provides a ligand contact to ATP.

It belongs to the MurCDEF family.

The protein localises to the cytoplasm. The enzyme catalyses UDP-N-acetyl-alpha-D-muramate + L-alanine + ATP = UDP-N-acetyl-alpha-D-muramoyl-L-alanine + ADP + phosphate + H(+). The protein operates within cell wall biogenesis; peptidoglycan biosynthesis. Functionally, cell wall formation. The sequence is that of UDP-N-acetylmuramate--L-alanine ligase from Salmonella gallinarum (strain 287/91 / NCTC 13346).